The following is a 408-amino-acid chain: MHEVKKVVLAYSGGLDTSVILKWLQDTYQCEVVTFTADIGQGEEVEPARKKALALGIKPENIFIDDLREEFVRDFVFPMFRANAVYEGEYLLGTSIARPLIAKRQIEIANMVGAEAVSHGATGKGNDQVRFELGYYALKPEVKVIAPWREWDLLSREKLLAYAETHGIDISKRKSGASPYSMDANLLHISYEGLALENPAAEPEEDMWLWSNSPEAAPDEAEYIELEYSQGDIVAVNGMAMSPAQVLTRLNQLGGKHGIGRLDIVENRYVGMKSRGCYETPGGTIMLKAHRAIESITLDREVAHLKDELMPKYAKLIYTGYWWAPERRMLQAMIDESQKTVNGWVRLKLYKGNVIVVGRESKTDSLFDPAIATFDEDGGAYNHADAAGFIRLNALRMRIAANARQRRG.

Residues Ala10–Ser18 and Ala37 each bind ATP. L-citrulline contacts are provided by Tyr90 and Ser95. Gly120 contacts ATP. L-aspartate-binding residues include Thr122, Asn126, and Asp127. L-citrulline is bound at residue Asn126. L-citrulline-binding residues include Arg130, Ser181, Ser190, Glu266, and Tyr278.

Belongs to the argininosuccinate synthase family. Type 1 subfamily. In terms of assembly, homotetramer.

It is found in the cytoplasm. The catalysed reaction is L-citrulline + L-aspartate + ATP = 2-(N(omega)-L-arginino)succinate + AMP + diphosphate + H(+). It functions in the pathway amino-acid biosynthesis; L-arginine biosynthesis; L-arginine from L-ornithine and carbamoyl phosphate: step 2/3. The protein is Argininosuccinate synthase of Laribacter hongkongensis (strain HLHK9).